The chain runs to 473 residues: H(+)/Cl(-) exchange transporter ClcA (473 aa).

Topologically, residues Met1 to Pro32 are cytoplasmic. The chain crosses the membrane as a helical span at residues Leu33–Val69. The Periplasmic segment spans residues His70–Pro76. The helical transmembrane segment at Leu77 to Tyr100 threads the bilayer. Residues Gly106–Pro110 carry the Selectivity filter part_1 motif. Ser107 provides a ligand contact to chloride. Residues Ile109–Leu116 constitute an intramembrane region (helical). Over Glu117 to Arg123 the chain is Cytoplasmic. 2 consecutive transmembrane segments (helical) span residues Trp124 to Gly141 and Glu148 to Phe166. The Selectivity filter part_2 motif lies at Gly146–Pro150. Topologically, residues Arg167–Thr176 are cytoplasmic. 2 intramembrane regions (helical) span residues Leu177–Ala189 and Pro193–Ile201. Over Glu202–Ser214 the chain is Cytoplasmic. Residues Ile215 to Phe232 traverse the membrane as a helical segment. At Asn233 to Leu252 the chain is on the periplasmic side. A helical membrane pass occupies residues Trp253–His281. At Arg282–Asn287 the chain is on the cytoplasmic side. Residues Ile288–Ala309 form a helical membrane-spanning segment. The Periplasmic portion of the chain corresponds to Pro310–Ser329. Transmembrane regions (helical) follow at residues Met330 to Ser349 and Gly355 to Val376. The Selectivity filter part_3 signature appears at Gly355 to Pro359. Ile356 and Phe357 together coordinate chloride. Topologically, residues Glu377–Ala386 are periplasmic. The helical intramembrane region spans Gly387–Ser401. The note=Loop between two helices intramembrane region spans Ile402 to Ala404. The segment at residues Pro405–Thr416 is an intramembrane region (helical). The segment at residues Asp417 to Leu421 is an intramembrane region (note=Loop between two helices). Residues Ile422–Phe438 form a helical membrane-spanning segment. At Thr439–Thr473 the chain is on the cytoplasmic side. Tyr445 contacts chloride.

The protein belongs to the chloride channel (TC 2.A.49) family. ClcA subfamily. Homodimer.

Its subcellular location is the cell inner membrane. It catalyses the reaction 2 chloride(in) + H(+)(out) = 2 chloride(out) + H(+)(in). In terms of biological role, proton-coupled chloride transporter. Functions as antiport system and exchanges two chloride ions for 1 proton. Probably acts as an electrical shunt for an outwardly-directed proton pump that is linked to amino acid decarboxylation, as part of the extreme acid resistance (XAR) response. This Escherichia coli O45:K1 (strain S88 / ExPEC) protein is H(+)/Cl(-) exchange transporter ClcA.